The chain runs to 215 residues: Wtf element wtf7 (215 aa).

The disordered stretch occupies residues 1-21 (MSGSYAPIEDSADELSVHSGN). Transmembrane regions (helical) follow at residues 119–139 (LAQSLFLLLPFNFIFFACLFF), 149–169 (LMGWILFGIWCLTCFLSSFIL), and 189–209 (LILFGLLFPGIVTMVVFYALY).

Belongs to the WTF family.

It localises to the spore membrane. Functionally, may act in meiotic drive. The polypeptide is Wtf element wtf7 (Schizosaccharomyces pombe (strain 972 / ATCC 24843) (Fission yeast)).